The sequence spans 306 residues: NAD kinase 1 (306 aa).

Aspartate 67 acts as the Proton acceptor in catalysis. Residues 67 to 68, 149 to 150, aspartate 181, and 192 to 197 each bind NAD(+); these read DG, NE, and TGYTVS.

This sequence belongs to the NAD kinase family. The cofactor is a divalent metal cation.

The protein localises to the cytoplasm. It catalyses the reaction NAD(+) + ATP = ADP + NADP(+) + H(+). In terms of biological role, involved in the regulation of the intracellular balance of NAD and NADP, and is a key enzyme in the biosynthesis of NADP. Catalyzes specifically the phosphorylation on 2'-hydroxyl of the adenosine moiety of NAD to yield NADP. The sequence is that of NAD kinase 1 from Trichormus variabilis (strain ATCC 29413 / PCC 7937) (Anabaena variabilis).